The chain runs to 457 residues: RuvB-like helicase 1 (457 aa).

73 to 80 (GGPSTGKT) contributes to the ATP binding site.

Belongs to the RuvB family. As to quaternary structure, may form heterododecamers with RVB2. Component of the SWR1 chromatin remodeling complex, the INO80 chromatin remodeling complex, and of the R2TP complex.

The protein resides in the nucleus. The enzyme catalyses ATP + H2O = ADP + phosphate + H(+). Functionally, DNA helicase which participates in several chromatin remodeling complexes, including the SWR1 and the INO80 complexes. The SWR1 complex mediates the ATP-dependent exchange of histone H2A for the H2A variant HZT1 leading to transcriptional regulation of selected genes by chromatin remodeling. The INO80 complex remodels chromatin by shifting nucleosomes and is involved in DNA repair. Also involved in pre-rRNA processing. This Candida glabrata (strain ATCC 2001 / BCRC 20586 / JCM 3761 / NBRC 0622 / NRRL Y-65 / CBS 138) (Yeast) protein is RuvB-like helicase 1 (RVB1).